Reading from the N-terminus, the 181-residue chain is MKQKILIRVTMTDDKTRAKAMTKAVQFKGVSAVEIKGDHRNQIEVTGVEVDMIPLIQILRKKVAFAELVSVTKVEPPKKEDEKKGGDGKGAEGKGGDQKGGDKKGPDDKEPPEPKPVPCYPWPLQGYGVPSSFPHQGYGVPSTFPQGDGVPSSFPYPCHPAHPYNDIGEPVYNHEPNCKIM.

Residues Lys2–Val71 form the HMA domain. The segment at Val74–Pro121 is disordered. Positions Glu75–Glu113 are enriched in basic and acidic residues. Cys178 carries the cysteine methyl ester modification. Cys178 is lipidated: S-farnesyl cysteine. A propeptide spans Lys179–Met181 (removed in mature form).

Belongs to the HIPP family.

In terms of biological role, probable heavy-metal-binding protein. This is Heavy metal-associated isoprenylated plant protein 46 from Arabidopsis thaliana (Mouse-ear cress).